Reading from the N-terminus, the 107-residue chain is Small ribosomal subunit protein bS18c (107 aa).

Basic residues predominate over residues Lys-85–Ser-95. A disordered region spans residues Lys-85–Lys-107.

It belongs to the bacterial ribosomal protein bS18 family. Part of the 30S ribosomal subunit.

It localises to the plastid. It is found in the chloroplast. The chain is Small ribosomal subunit protein bS18c from Oenothera argillicola (Appalachian evening primrose).